A 201-amino-acid polypeptide reads, in one-letter code: Small ribosomal subunit protein uS4c (201 aa).

The segment at 16-37 (GALPGLTSKRPRSGSDLRNQSR) is disordered. In terms of domain architecture, S4 RNA-binding spans 89–152 (MRLDNTLFRL…RSRTLIQNHI (64 aa)).

It belongs to the universal ribosomal protein uS4 family. In terms of assembly, part of the 30S ribosomal subunit. Contacts protein S5. The interaction surface between S4 and S5 is involved in control of translational fidelity.

The protein localises to the plastid. It is found in the chloroplast. In terms of biological role, one of the primary rRNA binding proteins, it binds directly to 16S rRNA where it nucleates assembly of the body of the 30S subunit. Its function is as follows. With S5 and S12 plays an important role in translational accuracy. This is Small ribosomal subunit protein uS4c (rps4) from Chloranthus spicatus (Chulantree).